The sequence spans 251 residues: Probable transcriptional regulatory protein MSMEG_2940/MSMEI_2866 (251 aa).

This sequence belongs to the TACO1 family.

The protein resides in the cytoplasm. The sequence is that of Probable transcriptional regulatory protein MSMEG_2940/MSMEI_2866 from Mycolicibacterium smegmatis (strain ATCC 700084 / mc(2)155) (Mycobacterium smegmatis).